The following is a 142-amino-acid chain: 3-hydroxyacyl-[acyl-carrier-protein] dehydratase FabZ (142 aa).

His48 is a catalytic residue.

It belongs to the thioester dehydratase family. FabZ subfamily.

The protein localises to the cytoplasm. The enzyme catalyses a (3R)-hydroxyacyl-[ACP] = a (2E)-enoyl-[ACP] + H2O. Functionally, involved in unsaturated fatty acids biosynthesis. Catalyzes the dehydration of short chain beta-hydroxyacyl-ACPs and long chain saturated and unsaturated beta-hydroxyacyl-ACPs. The chain is 3-hydroxyacyl-[acyl-carrier-protein] dehydratase FabZ from Desulforamulus reducens (strain ATCC BAA-1160 / DSM 100696 / MI-1) (Desulfotomaculum reducens).